The sequence spans 447 residues: NADP-specific glutamate dehydrogenase (447 aa).

Positions 92, 113, and 116 each coordinate substrate. Lys-128 acts as the Proton donor in catalysis. Gly-167 lines the substrate pocket. NADP(+) is bound by residues Thr-212 and Asn-243. Ser-379 contacts substrate.

This sequence belongs to the Glu/Leu/Phe/Val dehydrogenases family. Homohexamer.

The catalysed reaction is L-glutamate + NADP(+) + H2O = 2-oxoglutarate + NH4(+) + NADPH + H(+). Functionally, catalyzes the reversible oxidative deamination of glutamate to alpha-ketoglutarate and ammonia. The polypeptide is NADP-specific glutamate dehydrogenase (gdh) (Corynebacterium efficiens (strain DSM 44549 / YS-314 / AJ 12310 / JCM 11189 / NBRC 100395)).